The chain runs to 215 residues: Probable nicotinate-nucleotide adenylyltransferase (215 aa).

This sequence belongs to the NadD family.

It carries out the reaction nicotinate beta-D-ribonucleotide + ATP + H(+) = deamido-NAD(+) + diphosphate. It functions in the pathway cofactor biosynthesis; NAD(+) biosynthesis; deamido-NAD(+) from nicotinate D-ribonucleotide: step 1/1. Functionally, catalyzes the reversible adenylation of nicotinate mononucleotide (NaMN) to nicotinic acid adenine dinucleotide (NaAD). The polypeptide is Probable nicotinate-nucleotide adenylyltransferase (Gluconacetobacter diazotrophicus (strain ATCC 49037 / DSM 5601 / CCUG 37298 / CIP 103539 / LMG 7603 / PAl5)).